An 846-amino-acid polypeptide reads, in one-letter code: Translation initiation factor IF-2 (846 aa).

The tract at residues 94–263 is disordered; it reads QRSPEEIQAE…HGFQNPTGPV (170 aa). A compositionally biased stretch (basic and acidic residues) spans 96–135; it reads SPEEIQAEQKRELEERRAAENAARDKVEAEVRQRNEEQAR. Composition is skewed to low complexity over residues 136 to 148 and 158 to 176; these read RQAA…APAP and AAPV…ASED. Basic and acidic residues-rich tracts occupy residues 177–206 and 230–239; these read AAAR…RGEA and TTDEESDGAR. Over residues 240–253 the composition is skewed to basic residues; the sequence is RGRGGKSKLKKRNQ. The tr-type G domain occupies 346-513; the sequence is SRAPVVTVMG…AVLLQAEILE (168 aa). The G1 stretch occupies residues 355–362; it reads GHVDHGKT. Residue 355-362 coordinates GTP; sequence GHVDHGKT. The tract at residues 380 to 384 is G2; it reads GITQH. Residues 401–404 form a G3 region; the sequence is DTPG. Residues 401–405 and 455–458 each bind GTP; these read DTPGH and NKID. The segment at 455 to 458 is G4; sequence NKID. The interval 491 to 493 is G5; that stretch reads SAK.

This sequence belongs to the TRAFAC class translation factor GTPase superfamily. Classic translation factor GTPase family. IF-2 subfamily.

It localises to the cytoplasm. One of the essential components for the initiation of protein synthesis. Protects formylmethionyl-tRNA from spontaneous hydrolysis and promotes its binding to the 30S ribosomal subunits. Also involved in the hydrolysis of GTP during the formation of the 70S ribosomal complex. The protein is Translation initiation factor IF-2 of Pseudomonas putida (strain ATCC 700007 / DSM 6899 / JCM 31910 / BCRC 17059 / LMG 24140 / F1).